Consider the following 805-residue polypeptide: Transitional endoplasmic reticulum ATPase (805 aa).

Phosphoserine is present on S3. Residues 247–253 (PGTGKTL), N348, H384, and 521–526 (GCGKTL) each bind ATP. Residues 768-805 (FGSFRFPAGGQGGAGPSQGAGGGSGGSHFNEEEDDLYG) form a disordered region. Residues 776-793 (GGQGGAGPSQGAGGGSGG) are compositionally biased toward gly residues.

This sequence belongs to the AAA ATPase family. In terms of assembly, homohexamer. Forms a ring-shaped particle of 12.5 nm diameter, that displays 6-fold radial symmetry. Interacts with the FACT/DUF complex, which includes subunits ssrp1/duf87 and supt16h/duf140. Post-translationally, phosphorylated.

Its subcellular location is the cytoplasm. The protein resides in the cytosol. It is found in the endoplasmic reticulum. It localises to the nucleus. The protein localises to the stress granule. It catalyses the reaction ATP + H2O = ADP + phosphate + H(+). ATPase activity is inhibited or reduced by lowering pH from 9.0 to 7.0, and by addition of Ca(2+), EDTA, KNO(3) or by treatment with N-ethylmaleimide (NEM). Its function is as follows. Necessary for the fragmentation of Golgi stacks during mitosis and for their reassembly after mitosis. Involved in the formation of the nuclear envelope, and of the transitional endoplasmic reticulum (tER). The transfer of membranes from the endoplasmic reticulum to the Golgi apparatus occurs via 50-70 nm transition vesicles which derive from part-rough, part-smooth transitional elements of the endoplasmic reticulum (tER). Vesicle budding from the tER is an ATP-dependent process. Involved in endoplasmic reticulum stress-induced pre-emptive quality control, a mechanism that selectively attenuates the translocation of newly synthesized proteins into the endoplasmic reticulum and reroutes them to the cytosol for proteasomal degradation. Involved in clearance process by mediating G3BP1 extraction from stress granules. Also involved in DNA damage response: recruited to double-strand breaks (DSBs) sites and promotes the recruitment of tp53bp1 at DNA damage sites. Together with sprtn metalloprotease, involved in the repair of covalent DNA-protein cross-links (DPCs) during DNA synthesis. Involved in interstrand cross-link repair in response to replication stress by mediating unloading of the ubiquitinated CMG helicase complex. Enhances cell cycle progression and inhibits apoptosis at low temperatures. Essential for the maturation of ubiquitin-containing autophagosomes and the clearance of ubiquitinated protein by autophagy. Acts as a negative regulator of type I interferon production by promoting ubiquitination of rigi. May play a role in the ubiquitin-dependent sorting of membrane proteins to lysosomes where they undergo degradation. May more particularly play a role in caveolins sorting in cells. By controlling the steady-state expression of the IGF1R receptor, indirectly regulates the insulin-like growth factor receptor signaling pathway. The chain is Transitional endoplasmic reticulum ATPase from Xenopus tropicalis (Western clawed frog).